The following is a 329-amino-acid chain: Transmembrane protein I329L (329 aa).

The N-terminal stretch at 1 to 31 is a signal peptide; it reads MLRVFIFFVFLGSGLTGRIKPQVTCKYFISE. N32, N39, N44, N76, N82, and N101 each carry an N-linked (GlcNAc...) asparagine; by host glycan. Residues 32–239 lie on the Extracellular side of the membrane; the sequence is NNTWYKYNVT…NTERYKSCYP (208 aa). An LRR repeat occupies 112 to 133; it reads ELKFLDLRYNDLQVIDYNILRK. N-linked (GlcNAc...) asparagine; by host glycans are attached at residues N185 and N219. A disulfide bridge links C195 with C237. Residues 240–260 traverse the membrane as a helical segment; sequence LVFISILCSCISFLFLFICLL. Residues 261 to 329 lie on the Cytoplasmic side of the membrane; sequence RSICKKYSCT…EKKVSCSRRK (69 aa).

It belongs to the asfivirus I329L family. Post-translationally, highly glycosylated.

It is found in the host endoplasmic reticulum membrane. The protein resides in the host Golgi apparatus membrane. Viral TLR3 homolog that probably prevents TLR3 dimerization and subsequent induction of IFN. Inhibits dsRNA-stimulated activation of NF-kB and IRF3. The sequence is that of Transmembrane protein I329L from Ornithodoros (relapsing fever ticks).